A 556-amino-acid polypeptide reads, in one-letter code: Membrane protein insertase YidC (556 aa).

A run of 5 helical transmembrane segments spans residues 6 to 26, 332 to 352, 358 to 378, 428 to 448, and 501 to 521; these read IVLY…WQID, LDLT…FSLM, VVGN…LAFY, LGGC…YWVL, and VMMF…SGLV.

This sequence belongs to the OXA1/ALB3/YidC family. Type 1 subfamily. In terms of assembly, interacts with the Sec translocase complex via SecD. Specifically interacts with transmembrane segments of nascent integral membrane proteins during membrane integration.

It localises to the cell inner membrane. Its function is as follows. Required for the insertion and/or proper folding and/or complex formation of integral membrane proteins into the membrane. Involved in integration of membrane proteins that insert both dependently and independently of the Sec translocase complex, as well as at least some lipoproteins. Aids folding of multispanning membrane proteins. This chain is Membrane protein insertase YidC, found in Legionella pneumophila (strain Paris).